The primary structure comprises 80 residues: Large ribosomal subunit protein uL24 (80 aa).

It belongs to the universal ribosomal protein uL24 family. In terms of assembly, part of the 50S ribosomal subunit.

Functionally, one of two assembly initiator proteins, it binds directly to the 5'-end of the 23S rRNA, where it nucleates assembly of the 50S subunit. One of the proteins that surrounds the polypeptide exit tunnel on the outside of the subunit. This Chlorobaculum tepidum (strain ATCC 49652 / DSM 12025 / NBRC 103806 / TLS) (Chlorobium tepidum) protein is Large ribosomal subunit protein uL24.